Consider the following 324-residue polypeptide: UDP-N-acetylenolpyruvoylglucosamine reductase (324 aa).

The region spanning 36–203 (FRAGGLAELM…TSVLFEGYPE (168 aa)) is the FAD-binding PCMH-type domain. Residue Arg183 is part of the active site. Ser232 functions as the Proton donor in the catalytic mechanism. Glu302 is a catalytic residue.

This sequence belongs to the MurB family. The cofactor is FAD.

It is found in the cytoplasm. It catalyses the reaction UDP-N-acetyl-alpha-D-muramate + NADP(+) = UDP-N-acetyl-3-O-(1-carboxyvinyl)-alpha-D-glucosamine + NADPH + H(+). Its pathway is cell wall biogenesis; peptidoglycan biosynthesis. Its function is as follows. Cell wall formation. The protein is UDP-N-acetylenolpyruvoylglucosamine reductase of Rhizobium johnstonii (strain DSM 114642 / LMG 32736 / 3841) (Rhizobium leguminosarum bv. viciae).